Here is a 793-residue protein sequence, read N- to C-terminus: ClpA homolog protein (793 aa).

The interval 1 to 24 (MRPRSNAGSSPPDPEEQEHAQVPS) is disordered. Positions 22–168 (VPSFSSTLEQ…NFIAHGVAKD (147 aa)) constitute a Clp R domain. 2 repeat regions span residues 25-88 (FSST…IDDD) and 103-168 (PTAA…VAKD). Residues 169 to 194 (PSYGESRPVQGADEPQETPKAEAGEA) form a disordered region. Over residues 185 to 194 (ETPKAEAGEA) the composition is skewed to basic and acidic residues. The i stretch occupies residues 199 to 447 (LSKYCVDLNI…AQHLVSDSKR (249 aa)). Residues 244 to 251 (GDPGVGKT) and 525 to 532 (GPTGVGKT) each bind ATP. An II region spans residues 451–639 (LGTKEIEAVV…ILIMTSNVGA (189 aa)).

This sequence belongs to the ClpA/ClpB family.

This chain is ClpA homolog protein, found in Fuscovulum blasticum (Rhodobacter blasticus).